A 221-amino-acid polypeptide reads, in one-letter code: Ras-related protein Rab-27A (221 aa).

Residue Ser-2 is modified to N-acetylserine. Ser-2 is subject to Phosphoserine. 16-24 (GDSGVGKTS) provides a ligand contact to GTP. Residues 38 to 46 (FITTVGIDF) carry the Effector region motif. Residues 74–78 (DTAGQ), 133–136 (NKSD), and 163–165 (SAA) each bind GTP. A disulfide bridge links Cys-123 with Cys-188. 2 S-geranylgeranyl cysteine lipidation sites follow: Cys-219 and Cys-221. Cys-221 carries the post-translational modification Cysteine methyl ester.

The protein belongs to the small GTPase superfamily. Rab family. In terms of assembly, binds SYTL1, SYTL2, SLAC2B, MYRIP, SYTL3, SYTL4, SYTL5 and MLPH. Interacts with UNC13D. Interacts with RPH3A and RPH3A. Does not interact with the BLOC-3 complex (heterodimer of HPS1 and HPS4). Interacts (GDP-bound form preferentially) with DENND10. As to expression, detected in melanocytes. Expressed abundantly in the stomach and is predominantly localized at the apical region of gastric-surface mucus cells. Also expressed in the thymus and lung.

The protein resides in the membrane. It localises to the melanosome. Its subcellular location is the late endosome. It is found in the lysosome. The enzyme catalyses GTP + H2O = GDP + phosphate + H(+). Its activity is regulated as follows. Regulated by guanine nucleotide exchange factors (GEFs) which promote the exchange of bound GDP for free GTP, GTPase activating proteins (GAPs) which increase the GTP hydrolysis activity, and GDP dissociation inhibitors which inhibit the dissociation of the nucleotide from the GTPase. Activated by GEFs such as DENND10. Its function is as follows. Small GTPase which cycles between active GTP-bound and inactive GDP-bound states. In its active state, binds to a variety of effector proteins to regulate homeostasis of late endocytic pathway, including endosomal positioning, maturation and secretion. Plays a role in cytotoxic granule exocytosis in lymphocytes. Required for both granule maturation and granule docking and priming at the immunologic synapse. The chain is Ras-related protein Rab-27A (Rab27a) from Mus musculus (Mouse).